Reading from the N-terminus, the 372-residue chain is UDP-N-acetylenolpyruvoylglucosamine reductase (372 aa).

In terms of domain architecture, FAD-binding PCMH-type spans 29–205; the sequence is VGPTARRLIT…LEVEFALDAS (177 aa). The active site involves R177. The active-site Proton donor is S260. The active site involves E364.

It belongs to the MurB family. FAD is required as a cofactor.

Its subcellular location is the cytoplasm. It catalyses the reaction UDP-N-acetyl-alpha-D-muramate + NADP(+) = UDP-N-acetyl-3-O-(1-carboxyvinyl)-alpha-D-glucosamine + NADPH + H(+). Its pathway is cell wall biogenesis; peptidoglycan biosynthesis. Cell wall formation. The polypeptide is UDP-N-acetylenolpyruvoylglucosamine reductase (Mycobacterium avium (strain 104)).